Consider the following 142-residue polypeptide: Large ribosomal subunit protein uL13 (142 aa).

Belongs to the universal ribosomal protein uL13 family. Part of the 50S ribosomal subunit.

In terms of biological role, this protein is one of the early assembly proteins of the 50S ribosomal subunit, although it is not seen to bind rRNA by itself. It is important during the early stages of 50S assembly. The protein is Large ribosomal subunit protein uL13 of Pseudomonas putida (strain ATCC 700007 / DSM 6899 / JCM 31910 / BCRC 17059 / LMG 24140 / F1).